The primary structure comprises 67 residues: Major cold shock protein (67 aa).

Positions 4-63 (GTVKWFNAEKGFGFISTENGQDVFAHFSAIQTNGFKTLEEGQKVAFDVEEGQRGPQAVNI) constitute a CSD domain.

As to quaternary structure, homodimer.

The protein resides in the cytoplasm. In Streptococcus pyogenes serotype M3 (strain ATCC BAA-595 / MGAS315), this protein is Major cold shock protein (cspA).